The primary structure comprises 111 residues: Disintegrin CV-11-alpha (111 aa).

The N-terminal stretch at 1 to 20 (MIQVLLVIICLAVFPYQGSS) is a signal peptide. Residues 21 to 46 (IILESGNVNDFELVYPKKVTVLPTGA) constitute a propeptide that is removed on maturation. The Disintegrin domain occupies 47–111 (MNSAHPCCDP…SDCPRNPWKD (65 aa)). Intrachain disulfides connect cysteine 53–cysteine 76, cysteine 67–cysteine 73, cysteine 72–cysteine 97, and cysteine 85–cysteine 104. A Cell attachment site motif is present at residues 89 to 91 (KGD).

The protein belongs to the disintegrin family. Dimeric disintegrin subfamily. In terms of assembly, heterodimer with subunit beta; disulfide-linked. As to expression, expressed by the venom gland.

Its subcellular location is the secreted. Inhibits ADP-induced human platelet aggregation. Antagonist of alpha-IIb/beta-3 (ITGA2B/ITGB3). In Cerastes vipera (Sahara sand viper), this protein is Disintegrin CV-11-alpha.